The primary structure comprises 154 residues: Putative pre-16S rRNA nuclease (154 aa).

It belongs to the YqgF nuclease family.

The protein localises to the cytoplasm. Could be a nuclease involved in processing of the 5'-end of pre-16S rRNA. The sequence is that of Putative pre-16S rRNA nuclease from Pelotomaculum thermopropionicum (strain DSM 13744 / JCM 10971 / SI).